A 299-amino-acid chain; its full sequence is GTPase Era (299 aa).

The Era-type G domain occupies 5–175 (RSGFVCLVGR…IDVLAAALPP (171 aa)). The interval 13-20 (GRPNTGKS) is G1. 13 to 20 (GRPNTGKS) contacts GTP. A G2 region spans residues 39 to 43 (QTTRH). Residues 60-63 (DTPG) are G3. GTP is bound by residues 60–64 (DTPGL) and 124–127 (TKID). Positions 124–127 (TKID) are G4. The interval 154–156 (VSA) is G5. The KH type-2 domain occupies 206–285 (VRDELPHSLA…YLDLRVKVAK (80 aa)).

This sequence belongs to the TRAFAC class TrmE-Era-EngA-EngB-Septin-like GTPase superfamily. Era GTPase family. Monomer.

It is found in the cell envelope. The protein localises to the secreted. It localises to the cell wall. Its function is as follows. Exhibits GTPase activity. Binds RNA but is probably not involved in ribosome assembly in mycobacteria. The chain is GTPase Era from Mycobacterium avium (strain 104).